Consider the following 47-residue polypeptide: Photosystem II reaction center protein K (47 aa).

The propeptide occupies 1 to 10; the sequence is MASFTLDLLA. The chain crosses the membrane as a helical span at residues 19-39; that stretch reads FSPLIDILPLIPVFFLLLAFV.

It belongs to the PsbK family. As to quaternary structure, PSII is composed of 1 copy each of membrane proteins PsbA, PsbB, PsbC, PsbD, PsbE, PsbF, PsbH, PsbI, PsbJ, PsbK, PsbL, PsbM, PsbT, PsbX, PsbY, PsbZ, Psb30/Ycf12, peripheral proteins PsbO, CyanoQ (PsbQ), PsbU, PsbV and a large number of cofactors. It forms dimeric complexes.

The protein localises to the cellular thylakoid membrane. Its function is as follows. One of the components of the core complex of photosystem II (PSII). PSII is a light-driven water:plastoquinone oxidoreductase that uses light energy to abstract electrons from H(2)O, generating O(2) and a proton gradient subsequently used for ATP formation. It consists of a core antenna complex that captures photons, and an electron transfer chain that converts photonic excitation into a charge separation. The polypeptide is Photosystem II reaction center protein K (Parasynechococcus marenigrum (strain WH8102)).